The following is a 185-amino-acid chain: Ribosome-recycling factor (185 aa).

This sequence belongs to the RRF family.

It is found in the cytoplasm. Functionally, responsible for the release of ribosomes from messenger RNA at the termination of protein biosynthesis. May increase the efficiency of translation by recycling ribosomes from one round of translation to another. This chain is Ribosome-recycling factor, found in Parafrankia sp. (strain EAN1pec).